Here is a 334-residue protein sequence, read N- to C-terminus: S-adenosylmethionine decarboxylase proenzyme 1 (334 aa).

A substrate-binding site is contributed by Phe-7. Catalysis depends on residues Glu-8 and Glu-11. Glu-67 is a binding site for substrate. The active-site Schiff-base intermediate with substrate; via pyruvic acid is Ser-68. Ser-68 carries the post-translational modification Pyruvic acid (Ser); by autocatalysis. The active-site Proton donor; for catalytic activity is Cys-82. Substrate is bound at residue Phe-223. Catalysis depends on proton acceptor; for processing activity residues Ser-229 and His-243. Glu-247 contacts substrate. Ser-298 is subject to Phosphoserine.

Belongs to the eukaryotic AdoMetDC family. As to quaternary structure, heterotetramer of two alpha and two beta chains. It depends on pyruvate as a cofactor. Post-translationally, is synthesized initially as an inactive proenzyme. Formation of the active enzyme involves a self-maturation process in which the active site pyruvoyl group is generated from an internal serine residue via an autocatalytic post-translational modification. Two non-identical subunits are generated from the proenzyme in this reaction, and the pyruvate is formed at the N-terminus of the alpha chain, which is derived from the carboxyl end of the proenzyme. The post-translation cleavage follows an unusual pathway, termed non-hydrolytic serinolysis, in which the side chain hydroxyl group of the serine supplies its oxygen atom to form the C-terminus of the beta chain, while the remainder of the serine residue undergoes an oxidative deamination to produce ammonia and the pyruvoyl group blocking the N-terminus of the alpha chain. As to expression, expressed in embryonic stem cells; subsequently down-regulated in differentiating neural precursor cells.

It catalyses the reaction S-adenosyl-L-methionine + H(+) = S-adenosyl 3-(methylsulfanyl)propylamine + CO2. It functions in the pathway amine and polyamine biosynthesis; S-adenosylmethioninamine biosynthesis; S-adenosylmethioninamine from S-adenosyl-L-methionine: step 1/1. Its function is as follows. Essential for biosynthesis of the polyamines spermidine and spermine. Promotes maintenance and self-renewal of embryonic stem cells, by maintaining spermine levels. This is S-adenosylmethionine decarboxylase proenzyme 1 (Amd1) from Mus musculus (Mouse).